The sequence spans 832 residues: Putative beta-glucosidase (832 aa).

The active site involves aspartate 225. Residues 397–556 (TGKHGYVAKF…DPETEIDYAV (160 aa)) form the PA14 domain.

The protein belongs to the glycosyl hydrolase 3 family.

It is found in the cytoplasm. The enzyme catalyses Hydrolysis of terminal, non-reducing beta-D-glucosyl residues with release of beta-D-glucose.. The sequence is that of Putative beta-glucosidase from Schizosaccharomyces pombe (strain 972 / ATCC 24843) (Fission yeast).